A 788-amino-acid chain; its full sequence is Calpastatin (788 aa).

The span at 1 to 11 shows a compositional bias: pro residues; that stretch reads MSQPGPKPAAS. 3 disordered regions span residues 1-262, 289-493, and 514-580; these read MSQP…TGPV, LLEK…MCSI, and TLAG…SQEQ. A Phosphoserine modification is found at serine 11. Low complexity predominate over residues 12-21; it reads PRPSRGAAAR. The span at 38–49 shows a compositional bias: basic and acidic residues; the sequence is PGEKKGSDEKKA. The span at 65–87 shows a compositional bias: low complexity; the sequence is AATATKVTASSAATSKSPSMSTT. The span at 99–119 shows a compositional bias: basic and acidic residues; that stretch reads EGPDQKRPREQAVKTESKKPQ. Lysine 112 participates in a covalent cross-link: Glycyl lysine isopeptide (Lys-Gly) (interchain with G-Cter in SUMO2). N6-acetyllysine is present on lysine 129. Phosphoserine is present on serine 165. Threonine 216 is subject to Phosphothreonine. The residue at position 219 (serine 219) is a Phosphoserine. The span at 246–256 shows a compositional bias: basic and acidic residues; the sequence is GGHEDTNRDDP. Residues 251–303 form an Inhibitory domain 1 repeat; that stretch reads TNRDDPPYTGPVVLDPMYSTYLEALGIKEGTIPPEYRKLLEKNEGITQPLPDS. 2 positions are modified to phosphoserine: serine 303 and serine 324. 2 stretches are compositionally biased toward polar residues: residues 318 to 328 and 369 to 380; these read SDFTCSSPTGK and QALQALSDSLGT. One copy of the Inhibitory domain 2 repeat lies at 384-436; the sequence is DPPSHVSQAEQVKEAKAKEERQEKCGEDEDTVPAEYRLKPAKDKDGKPLLPEP. Basic and acidic residues-rich tracts occupy residues 394 to 408 and 419 to 430; these read QVKEAKAKEERQEKC and YRLKPAKDKDGK. Positions 441 to 453 are enriched in low complexity; that stretch reads KSLSESELIGELS. Serine 444, serine 446, and serine 453 each carry phosphoserine. Threonine 479 carries the post-translational modification Phosphothreonine. A Phosphoserine modification is found at serine 518. Residues 522–570 show a composition bias toward basic and acidic residues; the sequence is READPEHEKTVEDKVKEKAKEEEHEKLGEKEETVPPDYRLEEVKDKDGK. An Inhibitory domain 3 repeat occupies 524–577; sequence ADPEHEKTVEDKVKEKAKEEEHEKLGEKEETVPPDYRLEEVKDKDGKPLLPKES. A phosphoserine mark is found at serine 594, serine 605, serine 653, and serine 655. The segment at 620-788 is disordered; the sequence is VVSQTPAPST…PKAKEDARHS (169 aa). An Inhibitory domain 4 repeat occupies 661-714; that stretch reads PDPDENKPLDDKVKEKIKPEHSEKLGERDDTIPPEYRHLLDNDGKDKPEKPPTK. 2 stretches are compositionally biased toward basic and acidic residues: residues 661 to 726 and 759 to 788; these read PDPD…RDPI and ASKDGEKTKDSSKKTEEVSKPKAKEDARHS.

It belongs to the protease inhibitor I27 (calpastatin) family. Isoform 2 is the major form in all tissues examined. Isoform 1 accounts for 5-10% in tissues such as skeletal muscle, liver and brain, and 30% in myoblasts. Isoforms 4 and 5 are testis-specific. Isoform 6 is highly expressed in heart and skeletal muscle with lower levels in liver, brain and testis. Isoform 7 is expressed at high levels in liver.

Its function is as follows. Specific inhibition of calpain (calcium-dependent cysteine protease). Plays a key role in postmortem tenderization of meat and have been proposed to be involved in muscle protein degradation in living tissue. This Mus musculus (Mouse) protein is Calpastatin (Cast).